Here is a 185-residue protein sequence, read N- to C-terminus: 16S rRNA aminocarboxypropyltransferase (185 aa).

S-adenosyl-L-methionine-binding residues include Thr-19, Ile-69, Leu-93, Tyr-108, and Thr-112.

The protein belongs to the TDD superfamily. TSR3 family.

The protein resides in the cytoplasm. It carries out the reaction an N(1)-methylpseudouridine in rRNA + S-adenosyl-L-methionine = N(1)-methyl-N(3)-[(3S)-3-amino-3-carboxypropyl]pseudouridine in rRNA + S-methyl-5'-thioadenosine + H(+). Aminocarboxypropyltransferase that catalyzes the aminocarboxypropyl transfer on pseudouridine corresponding to position 914 in M.jannaschii 16S rRNA. It constitutes the last step in biosynthesis of the hypermodified N1-methyl-N3-(3-amino-3-carboxypropyl) pseudouridine (m1acp3-Psi). The sequence is that of 16S rRNA aminocarboxypropyltransferase from Vulcanisaeta distributa (strain DSM 14429 / JCM 11212 / NBRC 100878 / IC-017).